A 1190-amino-acid polypeptide reads, in one-letter code: Pumilio homolog 1 (1190 aa).

Disordered regions lie at residues 38–74 (LTSGPVGQQQPPQPPTHSALATGPHASPVGGSMGVAG), 491–531 (SNSA…QQTD), 611–675 (ANGP…NSSL), and 744–777 (GPVGMPLPSQGPSHSQTPPPSLSSHGSSTSLNLG). 4 stretches are compositionally biased toward low complexity: residues 491-508 (SNSASQQNNPQSQQGQQQ), 518-531 (PLTPNQNQQGQQTD), 628-675 (QQPQ…NSSL), and 765-777 (LSSHGSSTSLNLG). A PUM-HD domain is found at 830–1172 (GRSRLLEDFR…HILAKLEKYY (343 aa)). Pumilio repeat units lie at residues 850-885 (EIAGHIMEFSQDQHGSRFIQLKLERATPAERQLVFN), 886-921 (EILQAAYQLMVDVFGNYVIQKFFEFGSLEQKLALAE), 922-959 (RIRGHVLSLALQMYGCRVIQKALEFIPPDQQVINEMVR), 960-995 (ELDGHVLKCVKDQNGNHVVQKCIECVQPQSLQFIID), 996-1031 (AFKSQVFALSTHPYGCRVIQRILEHCLPEQTLPILE), 1032-1067 (ELHQHTEQLVQDQYGNYVIQHVLEHGRPEDKSKIVA), 1068-1103 (EIRGNVLVLSQHKFASNVVEKCVTHASRTERAMLID), and 1107-1146 (TMNDGPHSALYTMMKDQYANYVVQKMIDVAEPAQRKIVMH). The tract at residues 865–869 (SRFIQ) is adenine-nucleotide binding in RNA target. Positions 901–905 (NYVIQ) are uracil-nucleotide binding in RNA target. The adenine-nucleotide binding in RNA target stretch occupies residues 937–941 (CRVIQ). The tract at residues 975 to 979 (NHVVQ) is non-specific-nucleotide binding in RNA target. Residues 1011 to 1015 (CRVIQ) form an adenine-nucleotide binding in RNA target region. Positions 1047–1051 (NYVIQ) are uracil-nucleotide binding in RNA target. The interval 1083-1087 (SNVVE) is guanine-nucleotide binding in RNA target. The interval 1126 to 1130 (NYVVQ) is uracil-nucleotide binding in RNA target.

As to quaternary structure, interacts with cpeb1-a; interacts with unphosphorylated cpeb1-a but not phosphorylated. Component of a complex with papd4, sympk, tacc3, parn, dazl and cpeb1. Post-translationally, phosphorylated. Phosphorylation takes place at the time of dissociation of cpeb1-a from pum1 and the translational activation of ccnb1 mRNA. In terms of tissue distribution, present in oocytes (at protein level).

Its subcellular location is the cytoplasm. The protein localises to the P-body. The protein resides in the cytoplasmic granule. Its function is as follows. Sequence-specific RNA-binding protein that acts as a post-transcriptional repressor by binding the 3'-UTR of mRNA targets. Binds to an RNA consensus sequence, the Pumilio Response Element (PRE), 5'-UGUANAUA-3', that is related to the Nanos Response Element (NRE). Mediates post-transcriptional repression of transcripts via different mechanisms: acts via direct recruitment of deadenylase complexes leading to translational inhibition and mRNA degradation. Also mediates deadenylation-independent repression by promoting accessibility of miRNAs. Acts as a post-transcriptional repressor of ccnb1 mRNA during oocyte maturation. This Xenopus laevis (African clawed frog) protein is Pumilio homolog 1.